A 557-amino-acid polypeptide reads, in one-letter code: Mercuric reductase (557 aa).

One can recognise an HMA domain in the interval 1–65 (MILLSIEGMT…AIEALGYIAK (65 aa)). Cys-11 and Cys-14 together coordinate a metal cation. FAD is bound by residues Ala-106 and Ala-126. The cysteines at positions 133 and 138 are disulfide-linked. FAD-binding residues include Lys-142, Ala-207, Asp-399, and Val-407. 2 residues coordinate Hg(2+): Cys-554 and Cys-555.

Belongs to the class-I pyridine nucleotide-disulfide oxidoreductase family. As to quaternary structure, homodimer. FAD serves as cofactor.

It carries out the reaction Hg + NADP(+) + H(+) = Hg(2+) + NADPH. In terms of biological role, resistance to Hg(2+) in bacteria appears to be governed by a specialized system which includes mercuric reductase. MerA protein is responsible for volatilizing mercury as Hg(0). The chain is Mercuric reductase (merA) from Shewanella putrefaciens (Pseudomonas putrefaciens).